The chain runs to 366 residues: Flagellar P-ring protein (366 aa).

A signal peptide spans 1–27 (MKSKYSIFCMFLLRGFIFLGTVFSLNS).

Belongs to the FlgI family. In terms of assembly, the basal body constitutes a major portion of the flagellar organelle and consists of four rings (L,P,S, and M) mounted on a central rod.

Its subcellular location is the periplasm. The protein resides in the bacterial flagellum basal body. Assembles around the rod to form the L-ring and probably protects the motor/basal body from shearing forces during rotation. This Leptospira interrogans serogroup Icterohaemorrhagiae serovar copenhageni (strain Fiocruz L1-130) protein is Flagellar P-ring protein.